We begin with the raw amino-acid sequence, 220 residues long: Ribose-5-phosphate isomerase A (220 aa).

Substrate is bound by residues 28–31 (TGST), 81–84 (DGAD), and 94–97 (KGGG). Glu-103 functions as the Proton acceptor in the catalytic mechanism. Lys-121 serves as a coordination point for substrate.

The protein belongs to the ribose 5-phosphate isomerase family. Homodimer.

The catalysed reaction is aldehydo-D-ribose 5-phosphate = D-ribulose 5-phosphate. The protein operates within carbohydrate degradation; pentose phosphate pathway; D-ribose 5-phosphate from D-ribulose 5-phosphate (non-oxidative stage): step 1/1. Catalyzes the reversible conversion of ribose-5-phosphate to ribulose 5-phosphate. This Shewanella baltica (strain OS223) protein is Ribose-5-phosphate isomerase A.